The following is a 244-amino-acid chain: Guanine nucleotide exchange factor rei-1 (244 aa).

Coiled coils occupy residues 6–39 (DQLI…KKQF) and 81–144 (VQQA…KAEK). The interval 221–244 (DQIHQERSSQSSLAPSSDAESDSS) is disordered. Low complexity predominate over residues 228-238 (SSQSSLAPSSD).

This sequence belongs to the SH3BP5 family. In terms of assembly, homodimer, tetramer and multimer. Interacts with rab-11.1. Binds preferentially to the GDP-bound form of rab-11.1. In terms of tissue distribution, expressed in germ cells.

It localises to the cytoplasmic granule. It is found in the golgi apparatus membrane. In terms of biological role, guanine nucleotide exchange factor for Rab GTPase Rab-11.1. Spatially and temporally regulates the distribution of Rab-11.1 to target membranes during embryogenesis. Plays a role in cytokinesis, probably by targeting rab-11.1 to the cleavage furrows. This chain is Guanine nucleotide exchange factor rei-1, found in Caenorhabditis elegans.